The chain runs to 81 residues: Delta-actitoxin-Aeq2d (81 aa).

The N-terminal stretch at 1-19 (MNRLMILVFAAVILALASA) is a signal peptide. Residues 20 to 25 (DDVDIA) constitute a propeptide that is removed on maturation. Disulfide bonds link Cys-31–Cys-78, Cys-33–Cys-68, and Cys-61–Cys-79.

Belongs to the sea anemone sodium channel inhibitory toxin family. Type I subfamily.

Its subcellular location is the secreted. The protein localises to the nematocyst. Binds specifically to voltage-gated sodium channels (Nav), thereby delaying their inactivation during signal transduction. Causes death to crabs. The sequence is that of Delta-actitoxin-Aeq2d from Actinia equina (Beadlet anemone).